The chain runs to 623 residues: Leucine-rich repeat, immunoglobulin-like domain and transmembrane domain-containing protein 1 (623 aa).

An N-terminal signal peptide occupies residues 1 to 21 (MRVALGMLWLLALAWPPQARG). The 38-residue stretch at 22 to 59 (FCPSQCSCSLHIMGDGSKARTVVCNDPDMTLPPASIPP) folds into the LRRNT domain. Topologically, residues 22–526 (FCPSQCSCSL…EVVDAENTQQ (505 aa)) are lumenal. LRR repeat units lie at residues 60-81 (DTSR…AFRP), 84-105 (RLEQ…MLRG), 108-129 (RLRE…ALRD), 132-153 (KLRL…AARF), and 156-177 (NLTF…LIVS). Residue asparagine 156 is glycosylated (N-linked (GlcNAc...) asparagine). Residues 201-253 (NPWACDCRLYDLVHLLDGWAPNLAFIETELRCASPRSLAGVAFSQLELRKCQG) enclose the LRRCT domain. Residues 266 to 335 (LLGGTALLRC…YICQAKNFLG (70 aa)) form the Ig-like C2-type domain. A disulfide bond links cysteine 275 and cysteine 328. N-linked (GlcNAc...) asparagine glycans are attached at residues asparagine 296 and asparagine 455. In terms of domain architecture, Fibronectin type-III spans 430-518 (MVRSVKVVGD…QCVIFSTNEV (89 aa)). A helical transmembrane segment spans residues 527-547 (LINVVVISVAIVIALPLTLLV). Topologically, residues 548–623 (CCSALQKRCR…GGRRINEYFC (76 aa)) are cytoplasmic. The LRR 6 repeat unit spans residues 571–594 (YVNLERLGYSEDGLEELSRHSVSE).

In terms of assembly, may form a homodimer. Interacts with LRIT2; may form a heterodimer with LRIT2. Interacts (via its N-terminal extracellular domain) with metabotropic glutamate receptor GRM6. Interacts (via its extreme C-terminus) with the scaffold protein FRMPD2 (via the third PDZ domain); the interaction leads to their colocalization in photoreceptor synapses.

It is found in the endoplasmic reticulum membrane. The protein localises to the cell projection. It localises to the dendrite. Photoreceptor synaptic protein essential for normal vision. Involved in synapse formation in cone photoreceptor cells. The sequence is that of Leucine-rich repeat, immunoglobulin-like domain and transmembrane domain-containing protein 1 (LRIT1) from Homo sapiens (Human).